The primary structure comprises 662 residues: Histone-lysine N-methyltransferase SET9 (662 aa).

In terms of domain architecture, SET spans 114–228; it reads CPFEVTTTNR…EGDEITVSYG (115 aa). Disordered regions lie at residues 252–418 and 627–662; these read WAPM…DEHH and ESIRERFSTPRSGRESMSASVEVDSGRKRRRVRKTM. Over residues 260-271 the composition is skewed to acidic residues; sequence DSDDEDMEEAES. Low complexity predominate over residues 279-289; it reads ATSSGTATSGG. Positions 323–333 are enriched in basic and acidic residues; sequence RASDHLREATL. Composition is skewed to polar residues over residues 356–370, 382–395, and 402–411; these read ANINVTSPQMTQDIR, LDETSSSRESTPQS, and PKSSHSTDAT. Positions 627-640 are enriched in basic and acidic residues; the sequence is ESIRERFSTPRSGR. The segment covering 653 to 662 has biased composition (basic residues); it reads RKRRRVRKTM.

The protein belongs to the class V-like SAM-binding methyltransferase superfamily. Histone-lysine methyltransferase family. Suvar4-20 subfamily.

The protein localises to the nucleus. It is found in the chromosome. It carries out the reaction L-lysyl(20)-[histone H4] + 3 S-adenosyl-L-methionine = N(6),N(6),N(6)-trimethyl-L-lysyl(20)-[histone H4] + 3 S-adenosyl-L-homocysteine + 3 H(+). Its function is as follows. Histone methyltransferase that trimethylates 'Lys-20' of histone H4 to form H4K20me3. The chain is Histone-lysine N-methyltransferase SET9 (SET9) from Phaeosphaeria nodorum (strain SN15 / ATCC MYA-4574 / FGSC 10173) (Glume blotch fungus).